Reading from the N-terminus, the 128-residue chain is Cytochrome c oxidase subunit 5B, mitochondrial (128 aa).

The transit peptide at 1 to 30 (MKRGSAALEVRELKMQTPTASCVLSTQRAN) directs the protein to the mitochondrion. Lysine 67 and lysine 85 each carry N6-acetyllysine. Cysteine 90, cysteine 92, cysteine 112, and cysteine 115 together coordinate Zn(2+). Lysine 120 carries the N6-acetyllysine modification.

It belongs to the cytochrome c oxidase 5b family. Expressed in testis. Not expressed in brain, heart, liver, kidney, spleen, lung, duodenum, muscle, epididymis, vagina, uterus and ovary.

Its subcellular location is the mitochondrion inner membrane. This protein is one of the nuclear-coded polypeptide chains of cytochrome c oxidase, the terminal oxidase in mitochondrial electron transport. This Vulpes vulpes (Red fox) protein is Cytochrome c oxidase subunit 5B, mitochondrial.